Here is a 168-residue protein sequence, read N- to C-terminus: Crossover junction endodeoxyribonuclease RuvC (168 aa).

Active-site residues include Asp10, Glu70, and Asp143. Mg(2+)-binding residues include Asp10, Glu70, and Asp143.

It belongs to the RuvC family. In terms of assembly, homodimer which binds Holliday junction (HJ) DNA. The HJ becomes 2-fold symmetrical on binding to RuvC with unstacked arms; it has a different conformation from HJ DNA in complex with RuvA. In the full resolvosome a probable DNA-RuvA(4)-RuvB(12)-RuvC(2) complex forms which resolves the HJ. Mg(2+) is required as a cofactor.

It is found in the cytoplasm. It carries out the reaction Endonucleolytic cleavage at a junction such as a reciprocal single-stranded crossover between two homologous DNA duplexes (Holliday junction).. In terms of biological role, the RuvA-RuvB-RuvC complex processes Holliday junction (HJ) DNA during genetic recombination and DNA repair. Endonuclease that resolves HJ intermediates. Cleaves cruciform DNA by making single-stranded nicks across the HJ at symmetrical positions within the homologous arms, yielding a 5'-phosphate and a 3'-hydroxyl group; requires a central core of homology in the junction. The consensus cleavage sequence is 5'-(A/T)TT(C/G)-3'. Cleavage occurs on the 3'-side of the TT dinucleotide at the point of strand exchange. HJ branch migration catalyzed by RuvA-RuvB allows RuvC to scan DNA until it finds its consensus sequence, where it cleaves and resolves the cruciform DNA. In Thermotoga maritima (strain ATCC 43589 / DSM 3109 / JCM 10099 / NBRC 100826 / MSB8), this protein is Crossover junction endodeoxyribonuclease RuvC.